Reading from the N-terminus, the 292-residue chain is MASLKDMRVRIASTKATQKITKAMQMVAASKLRRAQSAAEAARPYAEKMDQVISNIASAAAGSPGAPVLLGGTGKDQVHLLLVCTGERGLSGAFNSSIVRLARERALALMNQGKDVKFFCVGRKGYEQLRRTFEKQIVENVELRSVRQLGFVNAEAIAKKVIARFNAGEFDVCTLFYSRFKSVIAQVPTAQQIIPLEVEAPAANAGPAPFYEYEPEEDEILTRLLPRNLAVQIFRALLENNASFYGAQMSAMDNATRNAGDMIRKQTLVYNRTRQAMITKELIEIISGAEAI.

Belongs to the ATPase gamma chain family. As to quaternary structure, F-type ATPases have 2 components, CF(1) - the catalytic core - and CF(0) - the membrane proton channel. CF(1) has five subunits: alpha(3), beta(3), gamma(1), delta(1), epsilon(1). CF(0) has three main subunits: a, b and c.

It is found in the cell inner membrane. Produces ATP from ADP in the presence of a proton gradient across the membrane. The gamma chain is believed to be important in regulating ATPase activity and the flow of protons through the CF(0) complex. This is ATP synthase gamma chain from Nitrobacter hamburgensis (strain DSM 10229 / NCIMB 13809 / X14).